The primary structure comprises 280 residues: Meiotic spindle formation protein 2 (280 aa).

Residues 1-104 (MSGLDDRKKL…LPKSSPESSV (104 aa)) form a disordered region. A compositionally biased stretch (basic and acidic residues) spans 72-92 (LHSESKKELSRNPVSRGEEHS). The segment covering 93 to 104 (SSLPKSSPESSV) has biased composition (low complexity).

In terms of assembly, interacts with mei-1.

It is found in the cytoplasm. The protein resides in the cytoskeleton. It localises to the spindle pole. In terms of biological role, forms a heterodimeric complex in conjunction with mei-1 which severs microtubules in vitro in an ATP-dependent manner. This activity may promote rapid reorganization of cellular microtubule arrays. May act to target mei-1 within the cell. Required specifically for meiotic spindle formation in the female germline. This Caenorhabditis elegans protein is Meiotic spindle formation protein 2 (mei-2).